A 185-amino-acid polypeptide reads, in one-letter code: Large ribosomal subunit protein uL5 (185 aa).

Belongs to the universal ribosomal protein uL5 family. As to quaternary structure, part of the 50S ribosomal subunit; part of the 5S rRNA/L5/L18/L25 subcomplex. Contacts the 5S rRNA and the P site tRNA. Forms a bridge to the 30S subunit in the 70S ribosome.

This is one of the proteins that bind and probably mediate the attachment of the 5S RNA into the large ribosomal subunit, where it forms part of the central protuberance. In the 70S ribosome it contacts protein S13 of the 30S subunit (bridge B1b), connecting the 2 subunits; this bridge is implicated in subunit movement. Contacts the P site tRNA; the 5S rRNA and some of its associated proteins might help stabilize positioning of ribosome-bound tRNAs. This chain is Large ribosomal subunit protein uL5, found in Rhizobium etli (strain ATCC 51251 / DSM 11541 / JCM 21823 / NBRC 15573 / CFN 42).